A 97-amino-acid polypeptide reads, in one-letter code: Putative regulatory protein Dole_1911 (97 aa).

Belongs to the RemA family.

The protein is Putative regulatory protein Dole_1911 of Desulfosudis oleivorans (strain DSM 6200 / JCM 39069 / Hxd3) (Desulfococcus oleovorans).